The primary structure comprises 75 residues: Small ribosomal subunit protein bS18 (75 aa).

The protein belongs to the bacterial ribosomal protein bS18 family. In terms of assembly, part of the 30S ribosomal subunit. Forms a tight heterodimer with protein bS6.

Its function is as follows. Binds as a heterodimer with protein bS6 to the central domain of the 16S rRNA, where it helps stabilize the platform of the 30S subunit. The chain is Small ribosomal subunit protein bS18 from Paracoccus denitrificans (strain Pd 1222).